Reading from the N-terminus, the 343-residue chain is Major outer membrane protein (343 aa).

The N-terminal stretch at 1-20 is a signal peptide; sequence MKKTIVALAVAAVAATSANA.

As to quaternary structure, disulfide bond interactions within and between MOMP molecules and other components form high molecular-weight oligomers.

It localises to the cell outer membrane. Structural rigidity of the outer membrane of elementary bodies and porin forming, permitting diffusion of solutes through the intracellular reticulate body membrane. The chain is Major outer membrane protein (ompH) from Pasteurella multocida.